Consider the following 61-residue polypeptide: UPF0434 protein PSPA7_2181 (61 aa).

Belongs to the UPF0434 family.

The polypeptide is UPF0434 protein PSPA7_2181 (Pseudomonas paraeruginosa (strain DSM 24068 / PA7) (Pseudomonas aeruginosa (strain PA7))).